The sequence spans 257 residues: UPF0246 protein CV_1250 (257 aa).

This sequence belongs to the UPF0246 family.

The polypeptide is UPF0246 protein CV_1250 (Chromobacterium violaceum (strain ATCC 12472 / DSM 30191 / JCM 1249 / CCUG 213 / NBRC 12614 / NCIMB 9131 / NCTC 9757 / MK)).